The chain runs to 34 residues: Potassium channel toxin alpha-KTx 6.13 (34 aa).

4 cysteine pairs are disulfide-bonded: Cys-3–Cys-24, Cys-9–Cys-29, Cys-13–Cys-31, and Cys-19–Cys-34. At Cys-34 the chain carries Cysteine amide.

Belongs to the short scorpion toxin superfamily. Potassium channel inhibitor family. Alpha-KTx 06 subfamily. Expressed by the venom gland.

It is found in the secreted. Its function is as follows. Antagonist of Kv1/KCNA potassium channels. Shows a weak interaction with muscle-type nicotinic acetylcholine receptors (nAChR), since it inhibits alpha-bungarotoxin binding to both muscle-type nAChR from T.californica (IC(50)=490 nM). This suggests it probably weakly inhibits nAChR. The chain is Potassium channel toxin alpha-KTx 6.13 from Heterometrus spinifer (Asia giant forest scorpion).